The chain runs to 398 residues: Argininosuccinate synthase (398 aa).

Position 8–16 (Ala8–Ser16) interacts with ATP. Tyr87 lines the L-citrulline pocket. Position 117 (Gly117) interacts with ATP. L-aspartate contacts are provided by Thr119, Asn123, and Asp124. Asn123 is a binding site for L-citrulline. Positions 127, 175, 260, and 272 each coordinate L-citrulline.

This sequence belongs to the argininosuccinate synthase family. Type 1 subfamily. As to quaternary structure, homotetramer.

It is found in the cytoplasm. It carries out the reaction L-citrulline + L-aspartate + ATP = 2-(N(omega)-L-arginino)succinate + AMP + diphosphate + H(+). It participates in amino-acid biosynthesis; L-arginine biosynthesis; L-arginine from L-ornithine and carbamoyl phosphate: step 2/3. The chain is Argininosuccinate synthase from Mycobacterium marinum (strain ATCC BAA-535 / M).